Consider the following 396-residue polypeptide: Tryptophan synthase beta chain (396 aa).

Lys-96 bears the N6-(pyridoxal phosphate)lysine mark.

Belongs to the TrpB family. Tetramer of two alpha and two beta chains. Requires pyridoxal 5'-phosphate as cofactor.

It carries out the reaction (1S,2R)-1-C-(indol-3-yl)glycerol 3-phosphate + L-serine = D-glyceraldehyde 3-phosphate + L-tryptophan + H2O. The protein operates within amino-acid biosynthesis; L-tryptophan biosynthesis; L-tryptophan from chorismate: step 5/5. Its function is as follows. The beta subunit is responsible for the synthesis of L-tryptophan from indole and L-serine. The protein is Tryptophan synthase beta chain of Azobacteroides pseudotrichonymphae genomovar. CFP2.